A 248-amino-acid chain; its full sequence is Probable phosphatase Sfri_3709 (248 aa).

Zn(2+) contacts are provided by His8, His10, His16, His41, Glu74, His102, His132, Asp193, and His195.

Belongs to the PHP family. Zn(2+) serves as cofactor.

This chain is Probable phosphatase Sfri_3709, found in Shewanella frigidimarina (strain NCIMB 400).